We begin with the raw amino-acid sequence, 271 residues long: Phosphate import ATP-binding protein PstB 2 (271 aa).

The ABC transporter domain maps to 25 to 266 (MATEDLHVYY…PQQKQTEDYI (242 aa)). 57–64 (GPSGCGKS) is an ATP binding site.

The protein belongs to the ABC transporter superfamily. Phosphate importer (TC 3.A.1.7) family. In terms of assembly, the complex is composed of two ATP-binding proteins (PstB), two transmembrane proteins (PstC and PstA) and a solute-binding protein (PstS).

It is found in the cell membrane. It carries out the reaction phosphate(out) + ATP + H2O = ADP + 2 phosphate(in) + H(+). Part of the ABC transporter complex PstSACB involved in phosphate import. Responsible for energy coupling to the transport system. This Listeria monocytogenes serotype 4b (strain F2365) protein is Phosphate import ATP-binding protein PstB 2.